Consider the following 158-residue polypeptide: NADH-quinone oxidoreductase subunit B 2 (158 aa).

Residues Cys37, Cys38, Cys102, and Cys132 each contribute to the [4Fe-4S] cluster site.

It belongs to the complex I 20 kDa subunit family. As to quaternary structure, NDH-1 is composed of 14 different subunits. Subunits NuoB, C, D, E, F, and G constitute the peripheral sector of the complex. [4Fe-4S] cluster is required as a cofactor.

It is found in the cell inner membrane. The catalysed reaction is a quinone + NADH + 5 H(+)(in) = a quinol + NAD(+) + 4 H(+)(out). Its function is as follows. NDH-1 shuttles electrons from NADH, via FMN and iron-sulfur (Fe-S) centers, to quinones in the respiratory chain. Couples the redox reaction to proton translocation (for every two electrons transferred, four hydrogen ions are translocated across the cytoplasmic membrane), and thus conserves the redox energy in a proton gradient. This is NADH-quinone oxidoreductase subunit B 2 from Nitrosospira multiformis (strain ATCC 25196 / NCIMB 11849 / C 71).